An 81-amino-acid polypeptide reads, in one-letter code: MSHSVKIYDTCIGCTQCVRACPLDVLEMVPWDGCKAAQIASSPRTEDCVGCKRCETACPTDFLSIRVYLGAETTRSMGLAY.

4Fe-4S ferredoxin-type domains are found at residues 2–31 (SHSV…MVPW) and 39–68 (IASS…IRVY). Residues Cys11, Cys14, Cys17, Cys21, Cys48, Cys51, Cys54, and Cys58 each contribute to the [4Fe-4S] cluster site.

The cyanobacterial PSI reaction center is composed of one copy each of PsaA,B,C,D,E,F,I,J,K,L,M and X, and forms trimeric complexes. [4Fe-4S] cluster serves as cofactor.

Its subcellular location is the cellular thylakoid membrane. It catalyses the reaction reduced [plastocyanin] + hnu + oxidized [2Fe-2S]-[ferredoxin] = oxidized [plastocyanin] + reduced [2Fe-2S]-[ferredoxin]. In terms of biological role, apoprotein for the two 4Fe-4S centers FA and FB of photosystem I (PSI); essential for photochemical activity. FB is the terminal electron acceptor of PSI, donating electrons to ferredoxin. The C-terminus interacts with PsaA/B/D and helps assemble the protein into the PSI complex. Required for binding of PsaD and PsaE to PSI. PSI is a plastocyanin/cytochrome c6-ferredoxin oxidoreductase, converting photonic excitation into a charge separation, which transfers an electron from the donor P700 chlorophyll pair to the spectroscopically characterized acceptors A0, A1, FX, FA and FB in turn. Mutant proteins with a 3Fe-4S center are unable to reconstitute PSI activity in vivo. The sequence is that of Photosystem I iron-sulfur center from Synechocystis sp. (strain ATCC 27184 / PCC 6803 / Kazusa).